We begin with the raw amino-acid sequence, 137 residues long: Large ribosomal subunit protein uL16 (137 aa).

The protein belongs to the universal ribosomal protein uL16 family. As to quaternary structure, part of the 50S ribosomal subunit.

In terms of biological role, binds 23S rRNA and is also seen to make contacts with the A and possibly P site tRNAs. The sequence is that of Large ribosomal subunit protein uL16 from Cereibacter sphaeroides (strain ATCC 17029 / ATH 2.4.9) (Rhodobacter sphaeroides).